Reading from the N-terminus, the 389-residue chain is Na(+)/H(+) antiporter NhaA (389 aa).

A run of 11 helical transmembrane segments spans residues 14-34 (AGGILLLVAVALAMLMANSPL), 59-79 (LILWINDGLMAVFFLLIGLEV), 95-115 (SLPTFAAIGGMLVPAGVYLLF), 124-144 (AGWAIPAATDIAFALGIMALL), 154-174 (VFLLALAIIDDLGVIVIIALF), 177-197 (TDLSTISLVIASLAIAGLVGL), 213-233 (LILWVAVLKSGVHATLAGVII), 257-277 (PWSTFFILPVFAFANAGVYVG), 292-312 (IALGLMLGKPIGVMVFSYIAV), 328-348 (IAPVAAMCGIGFTMSMFIASL), and 363-383 (LGTLIGSIMAALVGYFWLSKV).

Belongs to the NhaA Na(+)/H(+) (TC 2.A.33) antiporter family.

Its subcellular location is the cell inner membrane. The enzyme catalyses Na(+)(in) + 2 H(+)(out) = Na(+)(out) + 2 H(+)(in). In terms of biological role, na(+)/H(+) antiporter that extrudes sodium in exchange for external protons. This chain is Na(+)/H(+) antiporter NhaA, found in Shewanella baltica (strain OS195).